The chain runs to 433 residues: Putative ankyrin repeat protein R784 (433 aa).

ANK repeat units follow at residues 44-70 (NQNL…KTDV), 71-101 (NGLK…NNDL), 102-131 (LDLH…IVII), 179-205 (FYDS…NQCS), 206-235 (VRQK…RIFS), 237-264 (RRLI…IDLA), 265-294 (QNNF…DIHF), 296-321 (NGEC…NKVY), 322-351 (MSEK…ACMS), and 380-409 (NMRK…KLRE).

The chain is Putative ankyrin repeat protein R784 from Acanthamoeba polyphaga mimivirus (APMV).